A 60-amino-acid polypeptide reads, in one-letter code: Large ribosomal subunit protein bL32 (60 aa).

Residues Met1–Gln23 form a disordered region.

This sequence belongs to the bacterial ribosomal protein bL32 family.

The chain is Large ribosomal subunit protein bL32 from Chlamydia abortus (strain DSM 27085 / S26/3) (Chlamydophila abortus).